We begin with the raw amino-acid sequence, 381 residues long: Creatine kinase M-type (381 aa).

A Phosphagen kinase N-terminal domain is found at 11 to 98; it reads KLNYSAAEEF…FDPVIEDRHG (88 aa). Positions 125 to 367 constitute a Phosphagen kinase C-terminal domain; it reads YVLSSRVRTG…KLMVEMEKRL (243 aa). Residues 128-132, His-191, Arg-236, Arg-292, 320-325, and Asp-335 each bind ATP; these read SSRVR and RGTGGV.

The protein belongs to the ATP:guanido phosphotransferase family. Dimer of identical or non-identical chains. With MM being the major form in skeletal muscle and myocardium, MB existing in myocardium, and BB existing in many tissues, especially brain.

The protein localises to the cytoplasm. The catalysed reaction is creatine + ATP = N-phosphocreatine + ADP + H(+). In terms of biological role, reversibly catalyzes the transfer of phosphate between ATP and various phosphogens (e.g. creatine phosphate). Creatine kinase isoenzymes play a central role in energy transduction in tissues with large, fluctuating energy demands, such as skeletal muscle, heart, brain and spermatozoa. The protein is Creatine kinase M-type of Tetronarce californica (Pacific electric ray).